Consider the following 141-residue polypeptide: High mobility group B protein 3 (141 aa).

2 stretches are compositionally biased toward basic and acidic residues: residues 1–12 and 70–110; these read MKGAKSKAETRS and GGEK…LEEG. Disordered regions lie at residues 1-40 and 54-141; these read MKGAKSKAETRSTKLSVTKKPAKGAKGAAKDPNKPKRPSS and KEEH…EDDD. A DNA-binding region (HMG box) is located at residues 35–104; that stretch reads PKRPSSAFFV…EYEKNMKAYN (70 aa). Position 122 is a phosphoserine (Ser122). Positions 124–141 are enriched in acidic residues; that stretch reads VNDEDDAEDGSEEEEDDD.

This sequence belongs to the HMGB family. Expressed in lateral roots, root tips, stems, cotyledons, leaves and flowers (excluding ovary and pedicels).

Its subcellular location is the nucleus. It localises to the cytoplasm. It is found in the cytosol. Binds preferentially double-stranded DNA. The polypeptide is High mobility group B protein 3 (HMGB3) (Arabidopsis thaliana (Mouse-ear cress)).